The sequence spans 463 residues: tRNA-2-methylthio-N(6)-dimethylallyladenosine synthase (463 aa).

In terms of domain architecture, MTTase N-terminal spans 5–125 (RKLHIKSYGC…LPQLLAKAEQ (121 aa)). [4Fe-4S] cluster contacts are provided by cysteine 14, cysteine 50, cysteine 88, cysteine 166, cysteine 170, and cysteine 173. In terms of domain architecture, Radical SAM core spans 152–384 (RARGISAFVT…QQLIDQQQSA (233 aa)). Positions 387–449 (KAAIGRTVEV…RYSLLGELAS (63 aa)) constitute a TRAM domain.

Belongs to the methylthiotransferase family. MiaB subfamily. Monomer. It depends on [4Fe-4S] cluster as a cofactor.

It localises to the cytoplasm. It carries out the reaction N(6)-dimethylallyladenosine(37) in tRNA + (sulfur carrier)-SH + AH2 + 2 S-adenosyl-L-methionine = 2-methylsulfanyl-N(6)-dimethylallyladenosine(37) in tRNA + (sulfur carrier)-H + 5'-deoxyadenosine + L-methionine + A + S-adenosyl-L-homocysteine + 2 H(+). Functionally, catalyzes the methylthiolation of N6-(dimethylallyl)adenosine (i(6)A), leading to the formation of 2-methylthio-N6-(dimethylallyl)adenosine (ms(2)i(6)A) at position 37 in tRNAs that read codons beginning with uridine. In Rhodopseudomonas palustris (strain ATCC BAA-98 / CGA009), this protein is tRNA-2-methylthio-N(6)-dimethylallyladenosine synthase.